We begin with the raw amino-acid sequence, 381 residues long: Alkanesulfonate monooxygenase (381 aa).

The protein belongs to the SsuD family. As to quaternary structure, homotetramer.

It catalyses the reaction an alkanesulfonate + FMNH2 + O2 = an aldehyde + FMN + sulfite + H2O + 2 H(+). Functionally, catalyzes the desulfonation of aliphatic sulfonates. This Escherichia coli O127:H6 (strain E2348/69 / EPEC) protein is Alkanesulfonate monooxygenase.